The chain runs to 1187 residues: Tyrosine-protein phosphatase non-receptor type 14 (1187 aa).

Residues 21 to 306 (FVTRIRLLDS…TRHKFYKQNK (286 aa)) form the FERM domain. Phosphoserine is present on residues Ser314, Ser461, and Ser486. Residues 510–524 (LVSPSDQRNPKNNVV) show a composition bias toward polar residues. The disordered stretch occupies residues 510–531 (LVSPSDQRNPKNNVVPSKPGAS). 4 positions are modified to phosphoserine: Ser591, Ser593, Ser594, and Ser642. 2 disordered regions span residues 671–690 (LREQGPPEEGSGSHEVPQLP) and 787–824 (KAISMSRTDPPAVNGASLGPSISEPDLTSVKERVKKEP). Residues 815 to 824 (SVKERVKKEP) are compositionally biased toward basic and acidic residues. Ser831 bears the Phosphoserine mark. The Tyrosine-protein phosphatase domain maps to 909 to 1180 (VFTEYEQIPK…KFVYQVLIQF (272 aa)). Residues Asp1079, 1121-1127 (CSAGVGR), and Gln1165 contribute to the substrate site. Cys1121 (phosphocysteine intermediate) is an active-site residue.

The protein belongs to the protein-tyrosine phosphatase family. Non-receptor class subfamily. Interacts with FLT4; the interaction is enhanced by stimulation with VEGFC. Interacts (via PPxY motifs) with YAP1 (via WW domains); this interaction leads to the cytoplasmic sequestration of YAP1 and inhibits its transcriptional co-activator activity. Ubiquitinated by the ECS (Elongin BC-CUL2/5-SOCS-box protein)/LRR1 E3 ligase complex and subsequently targeted to proteasomal degradation. In terms of tissue distribution, ubiquitous.

The protein localises to the cytoplasm. The protein resides in the cytoskeleton. It localises to the nucleus. The catalysed reaction is O-phospho-L-tyrosyl-[protein] + H2O = L-tyrosyl-[protein] + phosphate. Functionally, protein tyrosine phosphatase which may play a role in the regulation of lymphangiogenesis, cell-cell adhesion, cell-matrix adhesion, cell migration, cell growth and also regulates TGF-beta gene expression, thereby modulating epithelial-mesenchymal transition. Mediates beta-catenin dephosphorylation at adhesion junctions. Acts as a negative regulator of the oncogenic property of YAP, a downstream target of the hippo pathway, in a cell density-dependent manner. May function as a tumor suppressor. This chain is Tyrosine-protein phosphatase non-receptor type 14 (PTPN14), found in Homo sapiens (Human).